Here is a 1765-residue protein sequence, read N- to C-terminus: RANBP2-like and GRIP domain-containing protein 5/6 (1765 aa).

T19 carries the phosphothreonine modification. S21 bears the Phosphoserine mark. TPR repeat units follow at residues 26-59 (SMKGFYFAKLYYEAKEYDLAKKYICTYINVQERD), 60-93 (PKAHRFLGLLYELEENTEKAVECYRRSVELNPTQ), and 648-681 (EDAHITFAMLDAVNGNIEDAVTAFESIKSVVSYW). Disordered regions lie at residues 760 to 804 (GPLY…PRWT) and 924 to 945 (FGISEPGNQEKKREKPLENDTG). The span at 778-797 (STPSPTKYSLSPSKSYKYSP) shows a compositional bias: low complexity. Over residues 931 to 941 (NQEKKREKPLE) the composition is skewed to basic and acidic residues. Residues 1036–1172 (HFEPVVQMPE…FEECQRLLLD (137 aa)) form the RanBD1 1 domain. Disordered stretches follow at residues 1214–1247 (KVTEEENKGSGTGAAGASDTTIKPNAENTGPTLE) and 1306–1330 (AKLNQSGTSVGTDEESVVTQEEERD). Over residues 1235–1244 (IKPNAENTGP) the composition is skewed to polar residues. Over residues 1317–1329 (TDEESVVTQEEER) the composition is skewed to acidic residues. A RanBD1 2 domain is found at 1333–1469 (YFEPVVPLPD…FDEAKTAQEK (137 aa)). The segment covering 1580-1593 (NNSETSSVAQSGSE) has biased composition (polar residues). The interval 1580-1621 (NNSETSSVAQSGSESKVEPKKCELSKNSDIEQSSDSKVKNLS) is disordered. The span at 1594-1617 (SKVEPKKCELSKNSDIEQSSDSKV) shows a compositional bias: basic and acidic residues. Positions 1702 to 1752 (REKSAANLEYLKNVLLQFIFLKPGSERERLLPVINTMLQLSPEEKGKLAAV) constitute a GRIP domain.

Expressed in testis.

The protein localises to the cytoplasm. This chain is RANBP2-like and GRIP domain-containing protein 5/6 (RGPD5), found in Homo sapiens (Human).